Reading from the N-terminus, the 114-residue chain is Large ribosomal subunit protein uL22c (114 aa).

The protein belongs to the universal ribosomal protein uL22 family. Part of the 50S ribosomal subunit.

Its subcellular location is the plastid. It is found in the chloroplast. Its function is as follows. This protein binds specifically to 23S rRNA. Functionally, the globular domain of the protein is located near the polypeptide exit tunnel on the outside of the subunit, while an extended beta-hairpin is found that lines the wall of the exit tunnel in the center of the 70S ribosome. The sequence is that of Large ribosomal subunit protein uL22c (rpl22) from Gracilaria tenuistipitata (Red alga).